The primary structure comprises 515 residues: Cytidine and dCMP deaminase domain-containing protein 1 (515 aa).

2 stretches are compositionally biased toward polar residues: residues 1 to 11 and 18 to 27; these read MKEAGQMQNLE and SVSTQTGSMT. Disordered regions lie at residues 1–27 and 56–83; these read MKEA…GSMT and RQKS…STDK. The span at 60-83 shows a compositional bias: basic and acidic residues; the sequence is QKNEEGKHGPLGDNEEMTRVSTDK. Residues 71-169 enclose the CMP/dCMP-type deaminase 1 domain; the sequence is GDNEEMTRVS…SLLTEASSSE (99 aa). Positions 110, 135, and 138 each coordinate Zn(2+). The short motif at 272–284 is the Nuclear export signal element; that stretch reads NLRQNMKDLILLL. Residues 318–483 enclose the CMP/dCMP-type deaminase 2 domain; the sequence is EIARHCMVQA…LNPSEAYGLE (166 aa). H399 is a binding site for Zn(2+). The active-site Proton donor is the E401. Zn(2+)-binding residues include C427 and C430. Residues 481 to 515 form a disordered region; it reads GLEQNEPERRENGVLRPVPQKEEQHQDKKLRLGIH. A compositionally biased stretch (basic and acidic residues) spans 486-515; it reads EPERRENGVLRPVPQKEEQHQDKKLRLGIH. Residues 489-511 carry the Bipartite nuclear localization signal motif; the sequence is RRENGVLRPVPQKEEQHQDKKLR.

This sequence belongs to the cytidine and deoxycytidylate deaminase family. Zn(2+) is required as a cofactor.

Its subcellular location is the cytoplasm. It is found in the nucleus. It carries out the reaction 2'-deoxycytidine + H2O + H(+) = 2'-deoxyuridine + NH4(+). The enzyme catalyses cytidine + H2O + H(+) = uridine + NH4(+). Functionally, catalyzes the deamination of cytidine and deoxycytidine into uridine and deoxyuridine, respectively. May play an important role in testicular development and spermatogenesis. The polypeptide is Cytidine and dCMP deaminase domain-containing protein 1 (CDADC1) (Macaca fascicularis (Crab-eating macaque)).